A 239-amino-acid polypeptide reads, in one-letter code: Geranylgeranylglyceryl phosphate synthase (239 aa).

A sn-glycerol 1-phosphate-binding site is contributed by lysine 13. Mg(2+) contacts are provided by aspartate 15 and threonine 42. Sn-glycerol 1-phosphate is bound by residues 162-167, glycine 192, and 212-213; these read YIEYSG and GD.

The protein belongs to the GGGP/HepGP synthase family. Group I subfamily. Mg(2+) serves as cofactor.

The protein resides in the cytoplasm. It carries out the reaction sn-glycerol 1-phosphate + (2E,6E,10E)-geranylgeranyl diphosphate = sn-3-O-(geranylgeranyl)glycerol 1-phosphate + diphosphate. The protein operates within membrane lipid metabolism; glycerophospholipid metabolism. Functionally, prenyltransferase that catalyzes the transfer of the geranylgeranyl moiety of geranylgeranyl diphosphate (GGPP) to the C3 hydroxyl of sn-glycerol-1-phosphate (G1P). This reaction is the first ether-bond-formation step in the biosynthesis of archaeal membrane lipids. The protein is Geranylgeranylglyceryl phosphate synthase of Haloquadratum walsbyi (strain DSM 16790 / HBSQ001).